The chain runs to 158 residues: Botcinic acid biosynthesis cluster B protein 16 (158 aa).

Its pathway is polyketide biosynthesis. Part of the gene cluster B that mediates the biosynthesis of botcinic acid and its botcinin derivatives, acetate-derived polyketides that contribute to virulence when combined with the sesquiterpene botrydial. Botcinic acid and its derivatives have been shown to induce chlorosis and necrosis during host plant infection, but also have antifungal activities. Two polyketide synthases, BOA6 and BOA9, are involved in the biosynthesis of botcinins. BOA6 mediates the formation of the per-methylated tetraketide core by condensation of four units of malonyl-CoA with one unit of acetyl-CoA, which would be methylated in activated methylene groups to yield a bicyclic acid intermediate that could then either be converted to botrylactone derivatives or lose the starter acetate unit through a retro-Claisen type C-C bond cleavage to yield botcinin derivatives. The second polyketide synthase, BOA9, is probably required for the biosynthesis of the tetraketide side chain of botcinins. The methyltransferase (MT) domain within BOA6 is probably responsible for the incorporation of four methyl groups. The trans-enoyl reductase BOA5 might take over the enoyl reductase function of BOA6 that misses an ER domain. The monooxygenases BOA2, BOA3 and BOA4 might be involved in further hydroxylations at C4, C5 and C8, whereas BOA7, close to BOA9, could potentially be involved in the hydroxylation at C4 in the side chain of botcinins. This chain is Botcinic acid biosynthesis cluster B protein 16, found in Botryotinia fuckeliana (strain B05.10) (Noble rot fungus).